Consider the following 333-residue polypeptide: Phenylalanine--tRNA ligase alpha subunit (333 aa).

Glutamate 258 contacts Mg(2+).

Belongs to the class-II aminoacyl-tRNA synthetase family. Phe-tRNA synthetase alpha subunit type 1 subfamily. As to quaternary structure, tetramer of two alpha and two beta subunits. Mg(2+) is required as a cofactor.

It is found in the cytoplasm. The enzyme catalyses tRNA(Phe) + L-phenylalanine + ATP = L-phenylalanyl-tRNA(Phe) + AMP + diphosphate + H(+). This is Phenylalanine--tRNA ligase alpha subunit from Wigglesworthia glossinidia brevipalpis.